We begin with the raw amino-acid sequence, 702 residues long: Ribosomal RNA large subunit methyltransferase K/L (702 aa).

In terms of domain architecture, THUMP spans 43–154 (LVYQSLMWSR…KETASIALDL (112 aa)).

Belongs to the methyltransferase superfamily. RlmKL family.

It is found in the cytoplasm. It carries out the reaction guanosine(2445) in 23S rRNA + S-adenosyl-L-methionine = N(2)-methylguanosine(2445) in 23S rRNA + S-adenosyl-L-homocysteine + H(+). The enzyme catalyses guanosine(2069) in 23S rRNA + S-adenosyl-L-methionine = N(2)-methylguanosine(2069) in 23S rRNA + S-adenosyl-L-homocysteine + H(+). In terms of biological role, specifically methylates the guanine in position 2445 (m2G2445) and the guanine in position 2069 (m7G2069) of 23S rRNA. The chain is Ribosomal RNA large subunit methyltransferase K/L from Escherichia coli (strain SMS-3-5 / SECEC).